The sequence spans 1382 residues: DNA-directed RNA polymerase subunit beta (1382 aa).

It belongs to the RNA polymerase beta chain family. As to quaternary structure, the RNAP catalytic core consists of 2 alpha, 1 beta, 1 beta' and 1 omega subunit. When a sigma factor is associated with the core the holoenzyme is formed, which can initiate transcription.

The catalysed reaction is RNA(n) + a ribonucleoside 5'-triphosphate = RNA(n+1) + diphosphate. DNA-dependent RNA polymerase catalyzes the transcription of DNA into RNA using the four ribonucleoside triphosphates as substrates. This Paracoccus denitrificans (strain Pd 1222) protein is DNA-directed RNA polymerase subunit beta.